A 197-amino-acid chain; its full sequence is Phosphoheptose isomerase (197 aa).

In terms of domain architecture, SIS spans 34 to 196 (MVNCLLGGNK…DRTLFPQDEQ (163 aa)). Residue 49-51 (NGG) coordinates substrate. Residues His-58 and Glu-62 each coordinate Zn(2+). Residues Glu-62, 91–92 (ND), 117–119 (STS), Ser-122, and Gln-172 contribute to the substrate site. Positions 172 and 180 each coordinate Zn(2+).

It belongs to the SIS family. GmhA subfamily. In terms of assembly, homotetramer. Zn(2+) is required as a cofactor.

It localises to the cytoplasm. The catalysed reaction is 2 D-sedoheptulose 7-phosphate = D-glycero-alpha-D-manno-heptose 7-phosphate + D-glycero-beta-D-manno-heptose 7-phosphate. It functions in the pathway carbohydrate biosynthesis; D-glycero-D-manno-heptose 7-phosphate biosynthesis; D-glycero-alpha-D-manno-heptose 7-phosphate and D-glycero-beta-D-manno-heptose 7-phosphate from sedoheptulose 7-phosphate: step 1/1. In terms of biological role, catalyzes the isomerization of sedoheptulose 7-phosphate in D-glycero-D-manno-heptose 7-phosphate. The polypeptide is Phosphoheptose isomerase (Shewanella pealeana (strain ATCC 700345 / ANG-SQ1)).